A 92-amino-acid chain; its full sequence is Small ribosomal subunit protein uS19 (92 aa).

The protein belongs to the universal ribosomal protein uS19 family.

In terms of biological role, protein S19 forms a complex with S13 that binds strongly to the 16S ribosomal RNA. The sequence is that of Small ribosomal subunit protein uS19 from Bifidobacterium adolescentis (strain ATCC 15703 / DSM 20083 / NCTC 11814 / E194a).